Reading from the N-terminus, the 89-residue chain is Small ribosomal subunit protein uS15 (89 aa).

The protein belongs to the universal ribosomal protein uS15 family. In terms of assembly, part of the 30S ribosomal subunit. Forms a bridge to the 50S subunit in the 70S ribosome, contacting the 23S rRNA.

In terms of biological role, one of the primary rRNA binding proteins, it binds directly to 16S rRNA where it helps nucleate assembly of the platform of the 30S subunit by binding and bridging several RNA helices of the 16S rRNA. Its function is as follows. Forms an intersubunit bridge (bridge B4) with the 23S rRNA of the 50S subunit in the ribosome. The protein is Small ribosomal subunit protein uS15 of Bacteroides thetaiotaomicron (strain ATCC 29148 / DSM 2079 / JCM 5827 / CCUG 10774 / NCTC 10582 / VPI-5482 / E50).